A 417-amino-acid chain; its full sequence is Gamma-glutamyl phosphate reductase (417 aa).

The protein belongs to the gamma-glutamyl phosphate reductase family.

It is found in the cytoplasm. It catalyses the reaction L-glutamate 5-semialdehyde + phosphate + NADP(+) = L-glutamyl 5-phosphate + NADPH + H(+). The protein operates within amino-acid biosynthesis; L-proline biosynthesis; L-glutamate 5-semialdehyde from L-glutamate: step 2/2. Functionally, catalyzes the NADPH-dependent reduction of L-glutamate 5-phosphate into L-glutamate 5-semialdehyde and phosphate. The product spontaneously undergoes cyclization to form 1-pyrroline-5-carboxylate. This is Gamma-glutamyl phosphate reductase from Escherichia coli O8 (strain IAI1).